Here is a 326-residue protein sequence, read N- to C-terminus: Eukaryotic translation initiation factor 3 subunit I (326 aa).

5 WD repeats span residues 8–47, 50–89, 145–184, 188–227, and 285–326; these read GHER…RLGT, GHQG…VIAS, MVES…KVVD, DHAA…CLKT, and GHFG…NIFE.

It belongs to the eIF-3 subunit I family. As to quaternary structure, component of the eukaryotic translation initiation factor 3 (eIF-3) complex. The eIF-3 complex interacts with pix.

It is found in the cytoplasm. Functionally, component of the eukaryotic translation initiation factor 3 (eIF-3) complex, which is involved in protein synthesis of a specialized repertoire of mRNAs and, together with other initiation factors, stimulates binding of mRNA and methionyl-tRNAi to the 40S ribosome. The eIF-3 complex specifically targets and initiates translation of a subset of mRNAs involved in cell proliferation. This is Eukaryotic translation initiation factor 3 subunit I from Drosophila grimshawi (Hawaiian fruit fly).